Consider the following 293-residue polypeptide: 4-hydroxy-tetrahydrodipicolinate synthase (293 aa).

T47 contacts pyruvate. The active-site Proton donor/acceptor is the Y136. K164 (schiff-base intermediate with substrate) is an active-site residue. I206 is a pyruvate binding site.

This sequence belongs to the DapA family. In terms of assembly, homotetramer; dimer of dimers.

It is found in the cytoplasm. It catalyses the reaction L-aspartate 4-semialdehyde + pyruvate = (2S,4S)-4-hydroxy-2,3,4,5-tetrahydrodipicolinate + H2O + H(+). Its pathway is amino-acid biosynthesis; L-lysine biosynthesis via DAP pathway; (S)-tetrahydrodipicolinate from L-aspartate: step 3/4. Functionally, catalyzes the condensation of (S)-aspartate-beta-semialdehyde [(S)-ASA] and pyruvate to 4-hydroxy-tetrahydrodipicolinate (HTPA). The protein is 4-hydroxy-tetrahydrodipicolinate synthase of Listeria welshimeri serovar 6b (strain ATCC 35897 / DSM 20650 / CCUG 15529 / CIP 8149 / NCTC 11857 / SLCC 5334 / V8).